A 974-amino-acid chain; its full sequence is MNAPLPMNAAAQGARPTLAELEARDAFAARHIGPDSAEQQHMLKVLGFESRAALIDAVVPAAIRRRDGMSLGEFTAPLTEEAALGRLRALAGKNRVLKSFIGQGYYNTLTPGVILRNIFENPAWYTAYTPYQPEISQGRLEAMLNFQQMITDLTGLDIANASMLDEGTAAAEAMTLLQRVNKHASNTFYVAEDVLPQTLEVVRTRALPLGIEVKVGPAADAAQAHAFGVLLQYPGVNGDVADYRAIAEAVHASGGRVVAAADLLALTLIAAPGEWGADVTVGNSQRFGVPLGFGGPHAGYMAVKDEFKRSMPGRLVGVTIDAQGNKAYRLALQTREQHIRREKATSNICTAQVLLAVMASMYAVYHGPQGLKRIAQRVHRLTATLAAGLKTLGHTPLNATFFDTLTLETGFNTDAFHASATARGINLRHVDATRIGISFDETASRDDVIALWEIFAHGKAVPDFDTIEASVQDGFPATLARQSAYLTHPVFNTHHAEHEMLRYLRALADKDLALDRTMIPLGSCTMKLNATSEMIPVTWPEFSNIHPFAPLDQTVGYREMIDQLEAMLCAATGYAAVSLQPNAGSQGEYAGLLIIHAYHASRGESHRDICLIPSSAHGTNPASAQMAGMKVVVVACDENGNVDLADLAKKAEQHSKNLAAIMITYPSTHGVFEQGVQQICDIVHKHGGQVYVDGANMNAMVGVAAPGQFGGDVSHLNLHKTFCIPHGGGGPGVGPVAVGAHLADFLPNQDSVGYRRDENGIGGVSAAPFGSASILPISWMYIAMMGSAGLTAATENAILTANYVARRLSPHFPVLYTGQHGLVAHECILDLRPLQKATGISNEDVAKRLMDYGFHAPTMSFPVPGTLMIEPTESEALHELDRFIDAMIAIRGEIARVEDGSFDREDNPLKHAPHTAAVVVSDKWNHKYTREEAAYPVASLRTQKYWPPVGRADNVYGDRNLFCSCVPLSEYAED.

N6-(pyridoxal phosphate)lysine is present on K720.

This sequence belongs to the GcvP family. As to quaternary structure, the glycine cleavage system is composed of four proteins: P, T, L and H. Pyridoxal 5'-phosphate is required as a cofactor.

It carries out the reaction N(6)-[(R)-lipoyl]-L-lysyl-[glycine-cleavage complex H protein] + glycine + H(+) = N(6)-[(R)-S(8)-aminomethyldihydrolipoyl]-L-lysyl-[glycine-cleavage complex H protein] + CO2. Its function is as follows. The glycine cleavage system catalyzes the degradation of glycine. The P protein binds the alpha-amino group of glycine through its pyridoxal phosphate cofactor; CO(2) is released and the remaining methylamine moiety is then transferred to the lipoamide cofactor of the H protein. The chain is Glycine dehydrogenase (decarboxylating) from Cupriavidus metallidurans (strain ATCC 43123 / DSM 2839 / NBRC 102507 / CH34) (Ralstonia metallidurans).